We begin with the raw amino-acid sequence, 493 residues long: 11S globulin seed storage protein G3 (493 aa).

The signal sequence occupies residues 1–20; that stretch reads MASKATLLLAFTLLFATCIA. Cystine bridges form between Cys-32–Cys-65 and Cys-103–Cys-312. The Cupin type-1 1 domain maps to 37–248; sequence IEALEPIEVI…SFNVDQETAQ (212 aa). Disordered stretches follow at residues 190-229 and 269-305; these read PQAQ…NIFN and IVRP…GWSN. 2 stretches are compositionally biased toward low complexity: residues 191–221 and 280–298; these read QAQA…QGQG and RQQQ…QQQG. The Cupin type-1 2 domain maps to 318–467; that stretch reads VNIDNPSQAD…RYQLSREEAQ (150 aa).

It belongs to the 11S seed storage protein (globulins) family. Hexamer; each subunit is composed of an acidic and a basic chain derived from a single precursor and linked by a disulfide bond.

Functionally, this is a seed storage protein. This chain is 11S globulin seed storage protein G3 (HAG3), found in Helianthus annuus (Common sunflower).